The chain runs to 176 residues: RNA pyrophosphohydrolase (176 aa).

The Nudix hydrolase domain occupies 6–149 (GYRPNVGIVI…KRDVYRRVMK (144 aa)). Residues 38–59 (GGINPGESPEQAMYRELFEEVG) carry the Nudix box motif.

This sequence belongs to the Nudix hydrolase family. RppH subfamily. The cofactor is a divalent metal cation.

In terms of biological role, accelerates the degradation of transcripts by removing pyrophosphate from the 5'-end of triphosphorylated RNA, leading to a more labile monophosphorylated state that can stimulate subsequent ribonuclease cleavage. In Proteus mirabilis (strain HI4320), this protein is RNA pyrophosphohydrolase.